The sequence spans 253 residues: Molybdate import ATP-binding protein MolC (253 aa).

The ABC transporter domain occupies 5 to 229; that stretch reads LSVENLGFYY…NLTALFHLPM (225 aa). 38–45 lines the ATP pocket; it reads GQNGCGKS.

Belongs to the ABC transporter superfamily. As to quaternary structure, the complex is composed of two ATP-binding proteins (MolC), two transmembrane proteins (MolB) and a solute-binding protein (MolA).

Its subcellular location is the cell inner membrane. The enzyme catalyses molybdate(out) + ATP + H2O = molybdate(in) + ADP + phosphate + H(+). Its activity is regulated as follows. The MolBCA complex shows a decrease in affinity in the presence of increasing concentrations of substrate and nucleotide. In terms of biological role, part of the ABC transporter complex MolBCA involved in molybdate import. Responsible for energy coupling to the transport system. Functions as a low-affinity molybdate transporter. This is Molybdate import ATP-binding protein MolC from Haemophilus influenzae (strain ATCC 51907 / DSM 11121 / KW20 / Rd).